Reading from the N-terminus, the 80-residue chain is Exodeoxyribonuclease 7 small subunit (80 aa).

It belongs to the XseB family. Heterooligomer composed of large and small subunits.

Its subcellular location is the cytoplasm. It carries out the reaction Exonucleolytic cleavage in either 5'- to 3'- or 3'- to 5'-direction to yield nucleoside 5'-phosphates.. Functionally, bidirectionally degrades single-stranded DNA into large acid-insoluble oligonucleotides, which are then degraded further into small acid-soluble oligonucleotides. The protein is Exodeoxyribonuclease 7 small subunit of Lactobacillus helveticus (strain DPC 4571).